Here is a 354-residue protein sequence, read N- to C-terminus: Nicotinate-nucleotide--dimethylbenzimidazole phosphoribosyltransferase (354 aa).

E319 acts as the Proton acceptor in catalysis.

This sequence belongs to the CobT family.

The catalysed reaction is 5,6-dimethylbenzimidazole + nicotinate beta-D-ribonucleotide = alpha-ribazole 5'-phosphate + nicotinate + H(+). Its pathway is nucleoside biosynthesis; alpha-ribazole biosynthesis; alpha-ribazole from 5,6-dimethylbenzimidazole: step 1/2. Catalyzes the synthesis of alpha-ribazole-5'-phosphate from nicotinate mononucleotide (NAMN) and 5,6-dimethylbenzimidazole (DMB). This chain is Nicotinate-nucleotide--dimethylbenzimidazole phosphoribosyltransferase, found in Chlorobium chlorochromatii (strain CaD3).